A 225-amino-acid chain; its full sequence is PKHD-type hydroxylase YbiX (225 aa).

Residues 78–177 enclose the Fe2OG dioxygenase domain; that stretch reads TLSTPLFNRY…RVASFMWIQS (100 aa). Residues histidine 96, aspartate 98, and histidine 158 each contribute to the Fe cation site. Arginine 168 serves as a coordination point for 2-oxoglutarate.

Requires Fe(2+) as cofactor. L-ascorbate is required as a cofactor.

In Shigella boydii serotype 18 (strain CDC 3083-94 / BS512), this protein is PKHD-type hydroxylase YbiX.